The chain runs to 786 residues: MQVESTLFSHPKYWAECFGTAPFLPMSRKEMEKLGWDSCDIIIVTGDAYVDHPSFGMAVIGRMLEAQGYRVGIIAQPDWSSKDAFMQLGRPNLFFGVTAGNMDSMINRYTADRRIRSDDAYTPGDVGGKRPDRAVTVYTQRCKEAFKDVPVIIGGIEASLRRIAHYDYWSDKVRRSVIFDAKADILMYGNAERPLAEVARRLAAGEAIADIQDVRGTAVIRKEPMPEWRGMDSRKIDQLHKIDPIPNPYGADDVGCANLSGPSDAKIFDNDAPKPISVQPPRPKPWDKTYVLLPAFEKVSEDKYLYAHASRILHQEQNPGCARALFQPHGDRGVWVNPPAWPLNTDEMDAVFDLPYKRVPHPAYGKEKIPAYDMIKTSINIMRGCFGGCSFCSITEHEGRIIQSRSQESIIKEIKDIQDKVPGFTGVISDLGGPTANMYRLGCTSEKAEKTCRRLSCVYPSICGHLGTDHKHTIDLYRAARAVPGIKKILIASGVRYDLAIEDPAYVKELVQHHVGGYLKIAPEHTEEGPLSKMMKPGMGAYDKFKELFDKFSKEAGKEQFLIPYFISAHPGTTDEDMLNLALWLKERKFKLDQVQNFYPSPMANATTIYHTELNSLKNVKHTSEVVPVPKKGRQRRLHKALLRYHDPAGWPIIREGLIAMGREDLIGNSPNHLVPPEGRNERGPKWMKDANQGQKALTRFSGNQFDERKGKGDAKGKPSASKPKGPKSGANAPQSQQPKTSRPGAKAPFGQSGFKGKAEQGKAGQNKAGHQGRAGKASSGRQQAK.

Residues 371-649 form the Radical SAM core domain; that stretch reads AYDMIKTSIN…KALLRYHDPA (279 aa). Residues C385, C389, and C392 each coordinate [4Fe-4S] cluster. Disordered stretches follow at residues 669 to 688 and 698 to 786; these read NSPN…PKWM and LTRF…QQAK. Composition is skewed to basic and acidic residues over residues 679-688 and 706-717; these read GRNERGPKWM and FDERKGKGDAKG. The span at 718–731 shows a compositional bias: low complexity; it reads KPSASKPKGPKSGA. The span at 732-741 shows a compositional bias: polar residues; it reads NAPQSQQPKT.

This sequence belongs to the UPF0313 family. [4Fe-4S] cluster is required as a cofactor.

The chain is UPF0313 protein SO_0311 from Shewanella oneidensis (strain ATCC 700550 / JCM 31522 / CIP 106686 / LMG 19005 / NCIMB 14063 / MR-1).